The following is a 413-amino-acid chain: Putative competence-damage inducible protein (413 aa).

This sequence belongs to the CinA family.

This chain is Putative competence-damage inducible protein, found in Thermoanaerobacter sp. (strain X514).